A 296-amino-acid chain; its full sequence is Prostate androgen-regulated mucin-like protein 1 homolog (296 aa).

A signal peptide spans 1-20 (MVCKVLIALCIFTAGLRVQG). At 21–244 (SPTVPLPVSL…EVENALSSGS (224 aa)) the chain is on the extracellular side. N-linked (GlcNAc...) asparagine glycosylation is found at Asn-61 and Asn-95. The segment at 72–220 (LTSQLPTDHR…SPQDTEPGKV (149 aa)) is disordered. Over residues 78–95 (TDHREEAVTSPPLKRDVN) the composition is skewed to basic and acidic residues. Polar residues predominate over residues 96 to 110 (STDSSPAGFPSTSSD). Over residues 139-167 (LLSSQAPTSATTSPATSLSESLSASVTSS) the composition is skewed to low complexity. Residues 168 to 177 (HNSTVANIQP) are compositionally biased toward polar residues. N-linked (GlcNAc...) asparagine glycosylation is present at Asn-169. Residues 206-217 (VPKEKSPQDTEP) show a composition bias toward basic and acidic residues. A helical transmembrane segment spans residues 245–265 (IAAITVTVIAVVLLVFGGAAY). The Cytoplasmic portion of the chain corresponds to 266-296 (LKIRHSSYGRLLDDHDYGSWGNYNNPLYDDS). The residue at position 284 (Ser-284) is a Phosphoserine.

Belongs to the PARM family. In terms of processing, highly N-glycosylated and O-glycosylated.

The protein resides in the cell membrane. It is found in the golgi apparatus membrane. It localises to the endosome membrane. Its function is as follows. May regulate TLP1 expression and telomerase activity, thus enabling certain prostatic cells to resist apoptosis. This chain is Prostate androgen-regulated mucin-like protein 1 homolog (Parm1), found in Mus musculus (Mouse).